A 448-amino-acid polypeptide reads, in one-letter code: MTGMDITTQDELNEAAMRDRASRDEERALRLGWWLVLAGFGGFLLWALLAPLDKGVAVQGNVVVSGNRKVIQHMQGGIVDRIQVKDGDRVAAGQVLLTLNAVDARTTSEGLGSQYDQLIAREARLLAEQRNQSSLAATPRLTQARQRPEMAAIIALQEDLLRSRQQSLKLEIDGVRASIDGLETSLGALQKVMSSKQSEQATLSQQLQGLRPLAADNYVPRNKMLETERLFAQVSGELAQTSGEVGRTRRDIQQQKLRIAQRQQEYDKEVNSELSDVQAKLNEVISQREKADFNLANVQVRAPVAGTVVDMKIFTEGGVIAPGQVMMDIVPEDQPLLVDGRIPVEMVDKVWSGLPVELQFTAFSQSTTPRVPGTVTLLSADRLVDEKDGTPYYGLRIQVSEEGKRSLHGLEIKPGMPVQGFVRTGERSFINYLFKPLMDRMHLALTEE.

Residues 1-30 (MTGMDITTQDELNEAAMRDRASRDEERALR) lie on the Cytoplasmic side of the membrane. Residues 31–50 (LGWWLVLAGFGGFLLWALLA) traverse the membrane as a helical segment. At 51–448 (PLDKGVAVQG…DRMHLALTEE (398 aa)) the chain is on the periplasmic side.

The protein belongs to the membrane fusion protein (MFP) (TC 8.A.1) family.

The protein localises to the cell inner membrane. Functionally, involved in the secretion of proteases A, B, C and G. This is Proteases secretion protein PrtE (prtE) from Dickeya chrysanthemi (Pectobacterium chrysanthemi).